Consider the following 63-residue polypeptide: UPF0370 protein ECA1289 (63 aa).

A helical membrane pass occupies residues 3 to 23 (WLADYWWIILIILIGMLINGI). Residues 39–63 (PKLPPHRDNNDKWDNEEDDWPKKKP) form a disordered region.

This sequence belongs to the UPF0370 family.

It localises to the cell membrane. The sequence is that of UPF0370 protein ECA1289 from Pectobacterium atrosepticum (strain SCRI 1043 / ATCC BAA-672) (Erwinia carotovora subsp. atroseptica).